The primary structure comprises 361 residues: Nicotinate-nucleotide--dimethylbenzimidazole phosphoribosyltransferase (361 aa).

The active-site Proton acceptor is the glutamate 315.

The protein belongs to the CobT family.

It catalyses the reaction 5,6-dimethylbenzimidazole + nicotinate beta-D-ribonucleotide = alpha-ribazole 5'-phosphate + nicotinate + H(+). It functions in the pathway nucleoside biosynthesis; alpha-ribazole biosynthesis; alpha-ribazole from 5,6-dimethylbenzimidazole: step 1/2. Functionally, catalyzes the synthesis of alpha-ribazole-5'-phosphate from nicotinate mononucleotide (NAMN) and 5,6-dimethylbenzimidazole (DMB). This chain is Nicotinate-nucleotide--dimethylbenzimidazole phosphoribosyltransferase, found in Clostridium perfringens (strain ATCC 13124 / DSM 756 / JCM 1290 / NCIMB 6125 / NCTC 8237 / Type A).